We begin with the raw amino-acid sequence, 911 residues long: DNA ligase 4 (911 aa).

ATP is bound by residues E271, T272, K273, L274, R278, E331, K345, F367, E427, K432, K449, and K451. Residue K273 is the N6-AMP-lysine intermediate of the active site. E331 contributes to the Mg(2+) binding site. Residue E427 coordinates Mg(2+). Residues 610–620 (LATKHLHVGDD) are required for catalytic activity. BRCT domains are found at residues 654-743 (KVSN…PRFM) and 808-911 (SPLS…QYLL).

The protein belongs to the ATP-dependent DNA ligase family. As to quaternary structure, interacts with XRCC4; the LIG4-XRCC4 subcomplex has a 1:2 stoichiometry and XRCC4 is required for LIG4 stability. Component of the core long-range non-homologous end joining (NHEJ) complex (also named DNA-PK complex) composed of PRKDC, LIG4, XRCC4, XRCC6/Ku70, XRCC5/Ku86 and NHEJ1/XLF. Additional component of the NHEJ complex includes PAXX. Following autophosphorylation, PRKDC dissociates from DNA, leading to formation of the short-range NHEJ complex, composed of LIG4, XRCC4, XRCC6/Ku70, XRCC5/Ku86 and NHEJ1/XLF. Interacts with DCLRE1C; the interaction is direct. Interacts with APLF. The cofactor is Mg(2+).

It localises to the nucleus. It catalyses the reaction ATP + (deoxyribonucleotide)n-3'-hydroxyl + 5'-phospho-(deoxyribonucleotide)m = (deoxyribonucleotide)n+m + AMP + diphosphate.. DNA ligase involved in DNA non-homologous end joining (NHEJ); required for double-strand break (DSB) repair and V(D)J recombination. Catalyzes the NHEJ ligation step of the broken DNA during DSB repair by resealing the DNA breaks after the gap filling is completed. Joins single-strand breaks in a double-stranded polydeoxynucleotide in an ATP-dependent reaction. LIG4 is mechanistically flexible: it can ligate nicks as well as compatible DNA overhangs alone, while in the presence of XRCC4, it can ligate ends with 2-nucleotides (nt) microhomology and 1-nt gaps. Forms a subcomplex with XRCC4; the LIG4-XRCC4 subcomplex is responsible for the NHEJ ligation step and XRCC4 enhances the joining activity of LIG4. Binding of the LIG4-XRCC4 complex to DNA ends is dependent on the assembly of the DNA-dependent protein kinase complex DNA-PK to these DNA ends. LIG4 regulates nuclear localization of XRCC4. This Mus musculus (Mouse) protein is DNA ligase 4.